The following is a 131-amino-acid chain: Small ribosomal subunit protein uS11 (131 aa).

This sequence belongs to the universal ribosomal protein uS11 family. Part of the 30S ribosomal subunit. Interacts with proteins S7 and S18. Binds to IF-3.

In terms of biological role, located on the platform of the 30S subunit, it bridges several disparate RNA helices of the 16S rRNA. Forms part of the Shine-Dalgarno cleft in the 70S ribosome. This is Small ribosomal subunit protein uS11 from Neisseria gonorrhoeae (strain ATCC 700825 / FA 1090).